The primary structure comprises 475 residues: Ribulose bisphosphate carboxylase large chain (475 aa).

Residues 1–2 (MS) constitute a propeptide that is removed on maturation. At proline 3 the chain carries N-acetylproline. Position 14 is an N6,N6,N6-trimethyllysine (lysine 14). Residues asparagine 123 and threonine 173 each coordinate substrate. Lysine 175 functions as the Proton acceptor in the catalytic mechanism. Substrate is bound at residue lysine 177. Lysine 201, aspartate 203, and glutamate 204 together coordinate Mg(2+). Position 201 is an N6-carboxylysine (lysine 201). Histidine 294 (proton acceptor) is an active-site residue. Positions 295, 327, and 379 each coordinate substrate.

Belongs to the RuBisCO large chain family. Type I subfamily. As to quaternary structure, heterohexadecamer of 8 large chains and 8 small chains; disulfide-linked. The disulfide link is formed within the large subunit homodimers. The cofactor is Mg(2+). Post-translationally, the disulfide bond which can form in the large chain dimeric partners within the hexadecamer appears to be associated with oxidative stress and protein turnover.

Its subcellular location is the plastid. The protein resides in the chloroplast. It carries out the reaction 2 (2R)-3-phosphoglycerate + 2 H(+) = D-ribulose 1,5-bisphosphate + CO2 + H2O. It catalyses the reaction D-ribulose 1,5-bisphosphate + O2 = 2-phosphoglycolate + (2R)-3-phosphoglycerate + 2 H(+). Functionally, ruBisCO catalyzes two reactions: the carboxylation of D-ribulose 1,5-bisphosphate, the primary event in carbon dioxide fixation, as well as the oxidative fragmentation of the pentose substrate in the photorespiration process. Both reactions occur simultaneously and in competition at the same active site. In Cerastium glomeratum (Sticky chickweed), this protein is Ribulose bisphosphate carboxylase large chain.